A 496-amino-acid chain; its full sequence is Iroquois-class homeodomain protein irx-4 (496 aa).

A DNA-binding region (homeobox; TALE-type) is located at residues 141 to 203 (GSTRRKNATR…NARRRLKKEN (63 aa)). Residues 203-236 (NKMTWPPRNKCSDEKRPYDEEEEEEEEEDSQKAT) are disordered. Positions 221 to 231 (DEEEEEEEEED) are enriched in acidic residues.

Belongs to the TALE/IRO homeobox family. As to expression, expressed in the neural plate in overlapping patterns with other irx members, which all share an anterior border of expression. Broadly expressed in the tailbud rhombencephalon (hindbrain). Outside the nervous system and at tailbud stages, expressed in the developing otic vesicle, branchial arches and prospective heart region.

It localises to the nucleus. Acts partially redundantly with other irx members in neural patterning. Required for formation of the posterior forebrain, midbrain, hindbrain, and to a lesser extent, spinal cord. Patterns the neuroectoderm in both the anterior/posterior and dorsal/ventral axes. Does not appear to play a role in pronephros kidney development. The protein is Iroquois-class homeodomain protein irx-4 of Xenopus tropicalis (Western clawed frog).